Consider the following 606-residue polypeptide: NADH-ubiquinone oxidoreductase chain 5 (606 aa).

15 helical membrane passes run 4–24, 43–63, 87–107, 117–137, 140–160, 171–191, 213–233, 241–261, 272–292, 310–330, 366–386, 413–433, 457–477, 482–502, and 582–602; these read FSSLSLVTLLLLTMPIMMMSL, AFITSMIPTMMFIHSGQELII, MMFTPVALFVTWSIMEFSMWY, FFKYLLLFLITMLILVTANNL, LFIGWEGVGIMSFLLIGWWYG, AVLYNRIGDIGFILAMAWFLT, LIGLALAATGKSAQFGLHPWL, TPVSALLHSSTMVVAGIFLLI, FIQSITLCLGAITTLFTAMCA, LGLMMVTIGINQPYLAFLHIC, MPFTTTALIVGSLALTGMPFL, LIATSFTAIYSTRIIFFALLG, LLIGSLFAGYIISNNIPPTTI, MPYYLKTTALIVTILGFILAL, and GLIKLYFLSFLITILISMMLF.

As to quaternary structure, core subunit of respiratory chain NADH dehydrogenase (Complex I) which is composed of 45 different subunits.

The protein localises to the mitochondrion inner membrane. It catalyses the reaction a ubiquinone + NADH + 5 H(+)(in) = a ubiquinol + NAD(+) + 4 H(+)(out). In terms of biological role, core subunit of the mitochondrial membrane respiratory chain NADH dehydrogenase (Complex I) which catalyzes electron transfer from NADH through the respiratory chain, using ubiquinone as an electron acceptor. Essential for the catalytic activity and assembly of complex I. In Bos indicus (Zebu), this protein is NADH-ubiquinone oxidoreductase chain 5 (MT-ND5).